A 136-amino-acid chain; its full sequence is Small ribosomal subunit protein uS19 (136 aa).

Residues 117-136 (VQHGDPGMGATRSSMFVPLK) are disordered.

This sequence belongs to the universal ribosomal protein uS19 family.

Functionally, protein S19 forms a complex with S13 that binds strongly to the 16S ribosomal RNA. The polypeptide is Small ribosomal subunit protein uS19 (Methanobrevibacter smithii (strain ATCC 35061 / DSM 861 / OCM 144 / PS)).